The primary structure comprises 357 residues: UDP-N-acetylglucosamine--N-acetylmuramyl-(pentapeptide) pyrophosphoryl-undecaprenol N-acetylglucosamine transferase (357 aa).

Residues 12–14 (TGG), Asn124, Arg162, Ser190, Ile244, 263–268 (ALTVAE), and Gln289 each bind UDP-N-acetyl-alpha-D-glucosamine.

It belongs to the glycosyltransferase 28 family. MurG subfamily.

The protein localises to the cell inner membrane. The catalysed reaction is di-trans,octa-cis-undecaprenyl diphospho-N-acetyl-alpha-D-muramoyl-L-alanyl-D-glutamyl-meso-2,6-diaminopimeloyl-D-alanyl-D-alanine + UDP-N-acetyl-alpha-D-glucosamine = di-trans,octa-cis-undecaprenyl diphospho-[N-acetyl-alpha-D-glucosaminyl-(1-&gt;4)]-N-acetyl-alpha-D-muramoyl-L-alanyl-D-glutamyl-meso-2,6-diaminopimeloyl-D-alanyl-D-alanine + UDP + H(+). It participates in cell wall biogenesis; peptidoglycan biosynthesis. Its function is as follows. Cell wall formation. Catalyzes the transfer of a GlcNAc subunit on undecaprenyl-pyrophosphoryl-MurNAc-pentapeptide (lipid intermediate I) to form undecaprenyl-pyrophosphoryl-MurNAc-(pentapeptide)GlcNAc (lipid intermediate II). In Alkalilimnicola ehrlichii (strain ATCC BAA-1101 / DSM 17681 / MLHE-1), this protein is UDP-N-acetylglucosamine--N-acetylmuramyl-(pentapeptide) pyrophosphoryl-undecaprenol N-acetylglucosamine transferase.